The chain runs to 578 residues: ATP-dependent RNA helicase has-1 (578 aa).

Residues Met-1–Thr-91 form a disordered region. Residues Asp-13–Lys-26 are compositionally biased toward basic and acidic residues. Over residues Lys-27–Lys-36 the composition is skewed to basic residues. 2 stretches are compositionally biased toward acidic residues: residues Glu-43–Asn-54 and Glu-77–Asp-88. The short motif at Thr-107–Arg-135 is the Q motif element. Residues Ile-138–Tyr-313 enclose the Helicase ATP-binding domain. Ala-151–Thr-158 contacts ATP. The DEAD box motif lies at Asp-260–Asp-263. The short motif at Lys-339–Lys-355 is the Bipartite nuclear localization signal element. The region spanning Leu-343–Ile-497 is the Helicase C-terminal domain. The tract at residues Ser-556 to His-578 is disordered.

This sequence belongs to the DEAD box helicase family. DDX18/HAS1 subfamily. Associates in the nucleolus with the 60S and pre-60S ribosomal subunits.

It is found in the nucleus. Its subcellular location is the nucleolus. The catalysed reaction is ATP + H2O = ADP + phosphate + H(+). Functionally, ATP-dependent RNA helicase involved in 40S ribosomal subunit biogenesis. Required for the processing and cleavage of 35S pre-rRNA at sites A0, A1, and A2, leading to mature 18S rRNA. The protein is ATP-dependent RNA helicase has-1 (has-1) of Neurospora crassa (strain ATCC 24698 / 74-OR23-1A / CBS 708.71 / DSM 1257 / FGSC 987).